The sequence spans 416 residues: D-amino acid dehydrogenase (416 aa).

3 to 17 lines the FAD pocket; sequence ITILGSGVIGVTTAY.

This sequence belongs to the DadA oxidoreductase family. It depends on FAD as a cofactor.

The enzyme catalyses a D-alpha-amino acid + A + H2O = a 2-oxocarboxylate + AH2 + NH4(+). The protein operates within amino-acid degradation; D-alanine degradation; NH(3) and pyruvate from D-alanine: step 1/1. Functionally, oxidative deamination of D-amino acids. This chain is D-amino acid dehydrogenase, found in Brucella canis (strain ATCC 23365 / NCTC 10854 / RM-666).